The following is a 222-amino-acid chain: Ribonuclease 3 (222 aa).

The signal sequence occupies residues 1–19 (MKFFIFILALQQLYVQSFA). Residue Gln-30 participates in RNA binding. Cysteines 36 and 42 form a disulfide. RNA is bound by residues His-57, Phe-107, 110 to 111 (HE), and 114 to 115 (KH). His-57 acts as the Proton donor in catalysis. Intrachain disulfides connect Cys-72–Cys-118, Cys-178–Cys-213, and Cys-194–Cys-205. Residue Glu-111 is part of the active site. The Proton acceptor role is filled by His-115.

This sequence belongs to the RNase T2 family.

The catalysed reaction is a ribonucleotidyl-ribonucleotide-RNA + H2O = a 3'-end 3'-phospho-ribonucleotide-RNA + a 5'-end dephospho-ribonucleoside-RNA + H(+). In terms of biological role, may remobilize phosphate, particularly when cells senesce or when phosphate becomes limiting. The protein is Ribonuclease 3 (RNS3) of Arabidopsis thaliana (Mouse-ear cress).